Reading from the N-terminus, the 264-residue chain is Thiamine pyrophosphokinase 1 (264 aa).

Residues 1 to 12 show a composition bias toward polar residues; sequence MPLPTMTHSSSF. The interval 1–27 is disordered; the sequence is MPLPTMTHSSSFLRLPATSSPHPPPAD.

It belongs to the thiamine pyrophosphokinase family.

It localises to the cytoplasm. Its subcellular location is the cytosol. The catalysed reaction is thiamine + ATP = thiamine diphosphate + AMP + H(+). It functions in the pathway cofactor biosynthesis; thiamine diphosphate biosynthesis; thiamine diphosphate from thiamine: step 1/1. Its function is as follows. Catalyzes the phosphorylation of thiamine to thiamine pyrophosphate (TPP). TPP is an active cofactor for enzymes involved in glycolysis and energy production. Plant leaves require high levels of TPP for photosynthesis and carbohydrate metabolism. This chain is Thiamine pyrophosphokinase 1 (TPK1), found in Oryza sativa subsp. japonica (Rice).